A 1021-amino-acid polypeptide reads, in one-letter code: Inversin (1021 aa).

16 ANK repeats span residues 7–36, 40–69, 73–102, 106–137, 141–170, 174–206, 213–243, 247–276, 281–310, 314–343, 349–378, 382–411, 415–444, 448–477, 481–510, and 516–546; these read QNPS…LRDS, FGRT…GINK, SQRT…DWRL, EEMT…EVDT, NKQT…NIGI, EGKI…TESL, EGRT…SVTA, LFRT…SGMI, QGAT…VRDE, EGRT…DIDI, YGGT…MVDP, MKHT…RVDL, DGHS…SPNL, AGRT…DPNI, EGRT…FPNH, and ERYT…SIAA. The short motif at 483-491 is the D-box 1 element; it reads RTALHWSCN. The 30-residue stretch at 548 to 577 folds into the IQ 1 domain; it reads QDIAASSIQALYKGYKVRRAFRERKKLLMR. 2 stretches are compositionally biased toward basic and acidic residues: residues 579–598 and 653–669; these read EQLR…REAE and SRRE…REPE. 3 disordered regions span residues 579–602, 632–691, and 704–868; these read EQLR…QQLS, KDSV…KKCP, and GPDT…GTCS. The span at 722–731 shows a compositional bias: low complexity; sequence PAGSSRPGSA. Composition is skewed to polar residues over residues 759-781 and 791-802; these read GAHS…TSKG and TGSQPSNNTSVT. The segment covering 803–866 has biased composition (basic and acidic residues); the sequence is RQKEKRQEKE…KEKEKKKDGT (64 aa). Residues 862–870 carry the D-box 2 motif; that stretch reads KKDGTCSKN. In terms of domain architecture, IQ 2 spans 869–898; it reads KNQAAVVIQRAWRRSCVRGRIRKVLCRSLK.

Binds calmodulin via its IQ domains.

The protein resides in the cytoplasm. It localises to the cytoskeleton. Required for normal renal development and establishment of left-right axis. Probably acts as a molecular switch between different Wnt signaling pathways. Inhibits the canonical Wnt pathway by targeting cytoplasmic disheveled for degradation by the ubiquitin-proteasome. This suggests that it is required in renal development to oppose the repression of terminal differentiation of tubular epithelial cells by Wnt signaling. The sequence is that of Inversin (invs) from Danio rerio (Zebrafish).